A 352-amino-acid chain; its full sequence is tRNA pseudouridine synthase D (352 aa).

The active-site Nucleophile is Asp81. The 147-residue stretch at 157–303 folds into the TRUD domain; sequence GIPNYFGAQR…MSHERRILRL (147 aa).

The protein belongs to the pseudouridine synthase TruD family.

The enzyme catalyses uridine(13) in tRNA = pseudouridine(13) in tRNA. Responsible for synthesis of pseudouridine from uracil-13 in transfer RNAs. The protein is tRNA pseudouridine synthase D of Pseudomonas fluorescens (strain Pf0-1).